The following is a 421-amino-acid chain: Nuclear speckle RNA-binding protein B (421 aa).

Disordered stretches follow at residues 1-64, 86-114, and 197-226; these read MDNR…VNIY, TGQTSTSTTSSSSSSSTSEPKDTSTMVDT, and TDPQEGTPYLIPSGDMHSYLSQDEDRGIPH. Pro residues predominate over residues 33–44; the sequence is PLAPPHPQPQPP. Over residues 89–103 the composition is skewed to low complexity; the sequence is TSTSTTSSSSSSSTS. Residues 323–409 enclose the RRM domain; that stretch reads NTLYVEGLPS…KILRLQFFRN (87 aa).

Isoform 1: Expressed in root meristems, lateral root primordia, root vascular tissues and cotyledon vascular tissues. Isoform 2: Expressed in root meristems, lateral root primordia and root vascular tissues.

The protein resides in the nucleus speckle. Functionally, alternative splicing (AS) regulator that binds to specific mRNAs and modulates auxin effects on the transcriptome. Displaced from its targets upon binding to AS competitor long non-coding RNA (ASCO-RNA). This is Nuclear speckle RNA-binding protein B from Arabidopsis thaliana (Mouse-ear cress).